The following is a 379-amino-acid chain: Alcohol dehydrogenase class-3 (379 aa).

Alanine 2 is modified (N-acetylalanine). Cysteine 47 is a binding site for Zn(2+). NAD(+) is bound at residue histidine 48. Threonine 49 and histidine 69 together coordinate an alcohol. Zn(2+) is bound by residues histidine 69, glutamate 70, cysteine 99, cysteine 102, cysteine 105, cysteine 113, and cysteine 177. Residues 202 to 207 (GLGTVG), aspartate 226, lysine 231, isoleucine 272, 295 to 297 (VGV), 320 to 322 (TAF), and arginine 372 contribute to the NAD(+) site.

The protein belongs to the zinc-containing alcohol dehydrogenase family. Class-III subfamily. As to quaternary structure, homodimer. Requires Zn(2+) as cofactor. As to expression, ubiquitous.

It is found in the cytoplasm. The catalysed reaction is a primary alcohol + NAD(+) = an aldehyde + NADH + H(+). It carries out the reaction a secondary alcohol + NAD(+) = a ketone + NADH + H(+). The enzyme catalyses S-(hydroxymethyl)glutathione + NADP(+) = S-formylglutathione + NADPH + H(+). It catalyses the reaction S-(hydroxymethyl)glutathione + NAD(+) = S-formylglutathione + NADH + H(+). The catalysed reaction is S-nitrosoglutathione + NADH + H(+) = S-(hydroxysulfenamide)glutathione + NAD(+). With respect to regulation, repressed by thiol-modifying agents N-ethylmaleimide (NEM) and 5,5-dithio-bis-(2-nitrobenzoic acid) (DTNB), as well as by methyl methanethiosulfonate (MMTS) in a dose-dependent manner. Inhibited by hydrogen peroxide H(2)O(2). Functionally, alcohol dehydrogenase catalyzing the reduction of nitrosoglutathione. Can also use long-chain alcohols including cinnamyl alcohol and geraniol, and, to a lower extent, octanol. Plays a central role in formaldehyde detoxification. Not able to use ethanol (EtOH) as substrate. This is Alcohol dehydrogenase class-3 from Arabidopsis thaliana (Mouse-ear cress).